A 331-amino-acid polypeptide reads, in one-letter code: PHD finger protein 11 (331 aa).

The C2HC pre-PHD-type zinc finger occupies 42–78 (KRTCALCPKDVEYNVLYFAQSENIAAHENCLLYSSGL). The PHD-type zinc-finger motif lies at 108–160 (LKCKFCHKRGATVGCDLKNCNKNYHFFCAKKDDAVPQSDGVRGIYKLLCQQHA).

As to quaternary structure, interacts with BRCA1 and RELA. As to expression, highly expressed in T and B-cells, as well as natural killer and mature dendritic cells. Expressed at higher levels in Th1 as compared to Th2 cells. Expressed at low levels in all normal tissues tested, including lung, testis, small intestine, breast, liver and placenta.

It localises to the nucleus. Its function is as follows. Positive regulator of Th1-type cytokine gene expression. The chain is PHD finger protein 11 (PHF11) from Homo sapiens (Human).